The following is a 514-amino-acid chain: 1-pyrroline-5-carboxylate dehydrogenase (514 aa).

Residues Glu286 and Cys320 contribute to the active site.

Belongs to the aldehyde dehydrogenase family. RocA subfamily.

The catalysed reaction is L-glutamate 5-semialdehyde + NAD(+) + H2O = L-glutamate + NADH + 2 H(+). It functions in the pathway amino-acid degradation; L-proline degradation into L-glutamate; L-glutamate from L-proline: step 2/2. The sequence is that of 1-pyrroline-5-carboxylate dehydrogenase from Staphylococcus epidermidis (strain ATCC 12228 / FDA PCI 1200).